Consider the following 275-residue polypeptide: Elongation factor Ts (275 aa).

The segment at 80–83 is involved in Mg(2+) ion dislocation from EF-Tu; the sequence is TDFV.

It belongs to the EF-Ts family.

It localises to the cytoplasm. Associates with the EF-Tu.GDP complex and induces the exchange of GDP to GTP. It remains bound to the aminoacyl-tRNA.EF-Tu.GTP complex up to the GTP hydrolysis stage on the ribosome. The chain is Elongation factor Ts from Clavibacter michiganensis subsp. michiganensis (strain NCPPB 382).